We begin with the raw amino-acid sequence, 147 residues long: MTKKTKPETYVFSQNFPISADKARRVIDRIRGRSYEETLVILELLPYRAAYPIFKFVCFAASNASSTSTSKKENLFISKAEVNERPAIKKLKPRARGRSYPIKKATCHITIVLTDLSFYFNELVEPQQEKNLLTKLYLNLRGLWDKK.

It belongs to the universal ribosomal protein uL22 family. As to quaternary structure, part of the 50S ribosomal subunit.

It is found in the plastid. This protein binds specifically to 23S rRNA. Functionally, the globular domain of the protein is located near the polypeptide exit tunnel on the outside of the subunit, while an extended beta-hairpin is found that lines the wall of the exit tunnel in the center of the 70S ribosome. The chain is Large ribosomal subunit protein uL22c (rpl22) from Cuscuta gronovii (Common dodder).